The primary structure comprises 1219 residues: NHS-like protein 2 (1219 aa).

Disordered stretches follow at residues 162-181 (FRSSDGAPEPTPSPRPQSAK), 288-321 (FSNFSQRDQGHSSSPTGSLARSATSDIRPGHSAP), 336-364 (FPSLTSPGLRHSSSEPGDAHQARSASDHP), 400-423 (TPSASSQGNQVSENGKNPSSGNSW), 474-591 (GLLA…ELVL), 669-741 (QGSS…SASV), 854-938 (GAEE…STAS), 979-1003 (IGLQSQEEAEKKMTKIPPPVPKKPS), 1033-1087 (LEED…DKTA), and 1121-1197 (WKET…KTTN). A compositionally biased stretch (polar residues) spans 288-312 (FSNFSQRDQGHSSSPTGSLARSATS). Over residues 352–364 (GDAHQARSASDHP) the composition is skewed to basic and acidic residues. The residue at position 499 (S499) is a Phosphoserine. Over residues 526 to 545 (ASTSSEGSNSTDNIAALSTE) the composition is skewed to polar residues. Residues 549-567 (RHRRQRSKSISLKKAKKKP) show a composition bias toward basic residues. Phosphoserine is present on S575. Positions 674 to 687 (SLASPSTSRATTPS) are enriched in low complexity. Residue S690 is modified to Phosphoserine. Polar residues-rich tracts occupy residues 708-729 (MSPSSGYSSQSETPTPTVSMSL) and 897-908 (TSPTMAMASRSS). At S1048 the chain carries Phosphoserine. Over residues 1076 to 1087 (AEEKSLISDKTA) the composition is skewed to basic and acidic residues. Over residues 1131–1144 (SKPSSHSPVKNTAD) the composition is skewed to polar residues. Positions 1145–1160 (SPTGEAAAAPGPSSSA) are enriched in low complexity. S1208 is modified (phosphoserine).

Belongs to the NHS family.

The chain is NHS-like protein 2 from Mus musculus (Mouse).